The primary structure comprises 336 residues: UPF0065 protein in tcbD-tcbE intergenic region (336 aa).

The first 32 residues, Met1–Ala32, serve as a signal peptide directing secretion.

This sequence belongs to the UPF0065 (bug) family.

Its subcellular location is the periplasm. In Pseudomonas sp. (strain P51), this protein is UPF0065 protein in tcbD-tcbE intergenic region.